The chain runs to 387 residues: Large ribosomal subunit protein uL3 (387 aa).

It belongs to the universal ribosomal protein uL3 family.

It is found in the cytoplasm. The chain is Large ribosomal subunit protein uL3 (RPL3) from Eremothecium gossypii (strain ATCC 10895 / CBS 109.51 / FGSC 9923 / NRRL Y-1056) (Yeast).